The primary structure comprises 108 residues: Thiosulfate sulfurtransferase GlpE (108 aa).

Positions 17-105 (QEKEAVLVDI…WQRQFPAEVA (89 aa)) constitute a Rhodanese domain. Catalysis depends on Cys-65, which acts as the Cysteine persulfide intermediate.

Belongs to the GlpE family.

It localises to the cytoplasm. The catalysed reaction is thiosulfate + hydrogen cyanide = thiocyanate + sulfite + 2 H(+). It catalyses the reaction thiosulfate + [thioredoxin]-dithiol = [thioredoxin]-disulfide + hydrogen sulfide + sulfite + 2 H(+). Functionally, transferase that catalyzes the transfer of sulfur from thiosulfate to thiophilic acceptors such as cyanide or dithiols. May function in a CysM-independent thiosulfate assimilation pathway by catalyzing the conversion of thiosulfate to sulfite, which can then be used for L-cysteine biosynthesis. This is Thiosulfate sulfurtransferase GlpE from Escherichia coli O8 (strain IAI1).